The primary structure comprises 263 residues: Uridylate kinase (263 aa).

29–32 (KVSG) contributes to the ATP binding site. A UMP-binding site is contributed by Gly71. ATP is bound by residues Gly72 and Arg76. Residues Asp91 and 152–159 (TGNPFFTT) contribute to the UMP site. ATP-binding residues include Thr179, Gln180, Tyr185, and Asp188.

Belongs to the UMP kinase family. Homohexamer.

It localises to the cytoplasm. It carries out the reaction UMP + ATP = UDP + ADP. The protein operates within pyrimidine metabolism; CTP biosynthesis via de novo pathway; UDP from UMP (UMPK route): step 1/1. With respect to regulation, inhibited by UTP. Catalyzes the reversible phosphorylation of UMP to UDP. The protein is Uridylate kinase of Maricaulis maris (strain MCS10) (Caulobacter maris).